The primary structure comprises 708 residues: E3 ubiquitin-protein ligase Praja-2 (708 aa).

Residues 1–10 show a composition bias toward basic and acidic residues; sequence MSQYTEKEPA. Disordered regions lie at residues 1-30 and 53-90; these read MSQY…GYQT and ERSL…SSLP. Ser2 carries the post-translational modification N-acetylserine. Polar residues predominate over residues 74–90; that stretch reads ENSSGSSPLDQVDSSLP. Residue Ser196 is modified to Phosphoserine. Disordered regions lie at residues 244–342, 385–411, and 425–495; these read GDTE…KQRS, TQRE…DNPF, and DEDS…QTSL. Thr246 is modified (phosphothreonine). A compositionally biased stretch (polar residues) spans 249-276; it reads VHQNSQEIQRSSQDEMVSTKQQNNTSQE. A phosphoserine mark is found at Ser253, Ser309, and Ser323. Residues 322-332 are compositionally biased toward polar residues; sequence ISSSQVDQETG. Basic and acidic residues predominate over residues 333 to 342; the sequence is FNRHEAKQRS. Position 342 is a phosphoserine; by PKA (Ser342). A Phosphothreonine; by PKA modification is found at Thr389. At Ser432 the chain carries Phosphoserine. Residues 467–483 are compositionally biased toward acidic residues; sequence NEPELQSDSSGPEEENQ. Residues 484–493 are compositionally biased toward polar residues; the sequence is ELSLQEGEQT. Residues 531 to 708 are interaction with PRKAR1A, PRKAR2A and PRKAR2B; the sequence is DGNNNLEDDS…PSNDSIAEAP (178 aa). The tract at residues 550–570 is mediates interaction with TBC1D31; that stretch reads WSLFDGFADGLGVAEAISYVD. The RING-type; atypical zinc-finger motif lies at 634-675; sequence CPICCSEYIKDDIATELPCHHFFHKPCVSIWLQKSGTCPVCR. The interval 685–708 is disordered; it reads ASAAPSSEPDPDAPPSNDSIAEAP. Positions 699–708 are enriched in low complexity; it reads PSNDSIAEAP.

In terms of assembly, binds ubiquitin-conjugating enzymes (E2s). In vitro, interacts with the ubiquitin-conjugating enzyme, UBE2D2. The phosphorylated form interacts with PRKAR1A, PRKAR2A and PRKAR2B. Binds the catalytic subunits of cAMP-dependent protein kinase. Interacts with MFHAS1. Interacts with TBC1D31; the interaction is direct and recruits PJA2 to centrosomes.

Its subcellular location is the cytoplasm. It is found in the cell membrane. The protein resides in the endoplasmic reticulum membrane. It localises to the golgi apparatus membrane. The protein localises to the synapse. Its subcellular location is the postsynaptic density. It is found in the cytoskeleton. The protein resides in the microtubule organizing center. It localises to the centrosome. It carries out the reaction S-ubiquitinyl-[E2 ubiquitin-conjugating enzyme]-L-cysteine + [acceptor protein]-L-lysine = [E2 ubiquitin-conjugating enzyme]-L-cysteine + N(6)-ubiquitinyl-[acceptor protein]-L-lysine.. It functions in the pathway protein modification; protein ubiquitination. Functionally, has E2-dependent E3 ubiquitin-protein ligase activity. Responsible for ubiquitination of cAMP-dependent protein kinase type I and type II-alpha/beta regulatory subunits and for targeting them for proteasomal degradation. Essential for PKA-mediated long-term memory processes. Through the ubiquitination of MFHAS1, positively regulates the TLR2 signaling pathway that leads to the activation of the downstream p38 and JNK MAP kinases and promotes the polarization of macrophages toward the pro-inflammatory M1 phenotype. Plays a role in ciliogenesis by ubiquitinating OFD1. The chain is E3 ubiquitin-protein ligase Praja-2 (PJA2) from Pongo abelii (Sumatran orangutan).